Here is a 96-residue protein sequence, read N- to C-terminus: Co-chaperonin GroES (96 aa).

The protein belongs to the GroES chaperonin family. As to quaternary structure, heptamer of 7 subunits arranged in a ring. Interacts with the chaperonin GroEL.

It is found in the cytoplasm. Functionally, together with the chaperonin GroEL, plays an essential role in assisting protein folding. The GroEL-GroES system forms a nano-cage that allows encapsulation of the non-native substrate proteins and provides a physical environment optimized to promote and accelerate protein folding. GroES binds to the apical surface of the GroEL ring, thereby capping the opening of the GroEL channel. The sequence is that of Co-chaperonin GroES from Shewanella sediminis (strain HAW-EB3).